Reading from the N-terminus, the 291-residue chain is MTVTRVVDTSCRLGEGPVWHPDEKRLYWVDIESGRLHRYDPETGAHDCPVETSVIAGVTIQRDGSLLAFMDRGRVGRVVDGDRRESARIVDSPTRFNDVIADPAGRVFCGTMPSDTAGGRLFRLDTDGTVTTVETGVGIPNGMGFTRDRERFYFTETEARTVYRYAYDEETGAVSARERFVESPETPGLPDGMTVDSAGHIWSARWEGGCVVEYDADGTELGRFDVPTEKVTSVAFGGPDLDSLYVTTAGGDGDGSAGEGDESTGDAAGALFRLDVAATGRPEFRSDVRLG.

A divalent metal cation is bound by residues Glu-15, Asn-141, and Asp-191. Asp-191 serves as the catalytic Proton donor/acceptor.

It belongs to the SMP-30/CGR1 family. In terms of assembly, monomer. A divalent metal cation is required as a cofactor.

The catalysed reaction is L-arabinono-1,4-lactone + H2O = L-arabinonate + H(+). It carries out the reaction D-xylono-1,4-lactone + H2O = D-xylonate + H(+). Its pathway is carbohydrate degradation. Its function is as follows. Pentonolactonase involved in D-arabinose and D-xylose catabolism. Catalyzes the hydrolysis of both L-arabino-gamma-lactone and D-xylono-gamma-lactone to the corresponding acids. Can also hydrolyze D-galactono-gamma-lactone and D-glucono-delta-lactone. The sequence is that of Pentonolactonase XacC from Haloferax volcanii (strain ATCC 29605 / DSM 3757 / JCM 8879 / NBRC 14742 / NCIMB 2012 / VKM B-1768 / DS2) (Halobacterium volcanii).